Reading from the N-terminus, the 121-residue chain is Large ribosomal subunit protein bL31 (121 aa).

Positions 1–97 are large ribosomal subunit protein bL31; sequence MKEGIHPDYK…AKENRAAKRA (97 aa). Zn(2+)-binding residues include Cys-16, Cys-18, Cys-36, and Cys-39. Over residues 65–80 the composition is skewed to low complexity; it reads ATPAKAEPAKKAPAAE. Residues 65–121 form a disordered region; that stretch reads ATPAKAEPAKKAPAAEPAKKVEAAKENRAAKRAKAGKSKKSEAAPAAEAPAADAKPE. The interval 74–121 is unknown; sequence KKAPAAEPAKKVEAAKENRAAKRAKAGKSKKSEAAPAAEAPAADAKPE. Residues 81 to 93 are compositionally biased toward basic and acidic residues; that stretch reads PAKKVEAAKENRA. Low complexity predominate over residues 107 to 121; the sequence is AAPAAEAPAADAKPE.

This sequence belongs to the bacterial ribosomal protein bL31 family. Type A subfamily. In terms of assembly, part of the 50S ribosomal subunit. Requires Zn(2+) as cofactor.

Its function is as follows. Binds the 23S rRNA. The sequence is that of Large ribosomal subunit protein bL31 from Anaeromyxobacter dehalogenans (strain 2CP-C).